The chain runs to 316 residues: Lipoyl synthase (316 aa).

Residues C60, C65, C71, C86, C90, C93, and S297 each contribute to the [4Fe-4S] cluster site. The Radical SAM core domain maps to W72–T286.

This sequence belongs to the radical SAM superfamily. Lipoyl synthase family. The cofactor is [4Fe-4S] cluster.

The protein localises to the cytoplasm. It catalyses the reaction [[Fe-S] cluster scaffold protein carrying a second [4Fe-4S](2+) cluster] + N(6)-octanoyl-L-lysyl-[protein] + 2 oxidized [2Fe-2S]-[ferredoxin] + 2 S-adenosyl-L-methionine + 4 H(+) = [[Fe-S] cluster scaffold protein] + N(6)-[(R)-dihydrolipoyl]-L-lysyl-[protein] + 4 Fe(3+) + 2 hydrogen sulfide + 2 5'-deoxyadenosine + 2 L-methionine + 2 reduced [2Fe-2S]-[ferredoxin]. Its pathway is protein modification; protein lipoylation via endogenous pathway; protein N(6)-(lipoyl)lysine from octanoyl-[acyl-carrier-protein]: step 2/2. Its function is as follows. Catalyzes the radical-mediated insertion of two sulfur atoms into the C-6 and C-8 positions of the octanoyl moiety bound to the lipoyl domains of lipoate-dependent enzymes, thereby converting the octanoylated domains into lipoylated derivatives. The polypeptide is Lipoyl synthase (Nocardioides sp. (strain ATCC BAA-499 / JS614)).